A 253-amino-acid chain; its full sequence is MRFDVITLFPEFFATPLRIGLVGKALEQGIAEVHCTNPRDFATDKHRRVDDEPYGGGVGMVLKPEPFFAAVASLPRLDPCEIILLTPQGQPLNQALLQELAQKAQLILLCGQYEGFDERIRQHLATREVSLGDFVLTGGEIPALALINGVVRLLPGTVGKIDSLRSESFETGLLEYPQYTRPPEFQGHKVPPVLLSGDHRAIARWRLQQQLVRTWRRRPDLLAKRPLTPEEQQLLAEGLAEQHTDVEEQDRCL.

Residues Gly-111 and 131 to 136 (LGDFVL) each bind S-adenosyl-L-methionine.

It belongs to the RNA methyltransferase TrmD family. In terms of assembly, homodimer.

The protein resides in the cytoplasm. The enzyme catalyses guanosine(37) in tRNA + S-adenosyl-L-methionine = N(1)-methylguanosine(37) in tRNA + S-adenosyl-L-homocysteine + H(+). Specifically methylates guanosine-37 in various tRNAs. The polypeptide is tRNA (guanine-N(1)-)-methyltransferase (Synechococcus sp. (strain JA-3-3Ab) (Cyanobacteria bacterium Yellowstone A-Prime)).